The chain runs to 268 residues: Energy-coupling factor transporter transmembrane protein EcfT (268 aa).

Transmembrane regions (helical) follow at residues 29–49 (VFIF…TVAV), 75–95 (IIIV…EVIV), 107–127 (LIEG…ASLL), 152–172 (LPTH…PTLI), and 242–262 (WGLK…AVMA).

It belongs to the energy-coupling factor EcfT family. Forms a stable energy-coupling factor (ECF) transporter complex composed of 2 membrane-embedded substrate-binding proteins (S component), 2 ATP-binding proteins (A component) and 2 transmembrane proteins (T component). May be able to interact with more than 1 S component at a time.

It localises to the cell membrane. Transmembrane (T) component of an energy-coupling factor (ECF) ABC-transporter complex. Unlike classic ABC transporters this ECF transporter provides the energy necessary to transport a number of different substrates. In Bacillus selenitireducens (strain ATCC 700615 / DSM 15326 / MLS10), this protein is Energy-coupling factor transporter transmembrane protein EcfT.